Here is a 407-residue protein sequence, read N- to C-terminus: GTPase Obg (407 aa).

The Obg domain occupies 1 to 159 (MKFVDEVSIR…RDLKMEMKVL (159 aa)). A disordered region spans residues 127–150 (NTRFKSSTNRAPRQTTPGKPGDQR). Residues 129–143 (RFKSSTNRAPRQTTP) show a composition bias toward polar residues. The region spanning 160–333 (ADVGLLGLPN…LSHDLMRYLE (174 aa)) is the OBG-type G domain. GTP is bound by residues 166–173 (GLPNAGKS), 191–195 (FTTLV), 213–216 (DIPG), 283–286 (NKAD), and 314–316 (SAI). Mg(2+) contacts are provided by Ser-173 and Thr-193. Residues 378–407 (VKSVHDIGDDDDWDDFEDDEDGPEIIYVRD) are disordered. Residues 385 to 400 (GDDDDWDDFEDDEDGP) are compositionally biased toward acidic residues.

Belongs to the TRAFAC class OBG-HflX-like GTPase superfamily. OBG GTPase family. As to quaternary structure, monomer. It depends on Mg(2+) as a cofactor.

The protein localises to the cytoplasm. Its function is as follows. An essential GTPase which binds GTP, GDP and possibly (p)ppGpp with moderate affinity, with high nucleotide exchange rates and a fairly low GTP hydrolysis rate. Plays a role in control of the cell cycle, stress response, ribosome biogenesis and in those bacteria that undergo differentiation, in morphogenesis control. The protein is GTPase Obg of Pseudomonas entomophila (strain L48).